The sequence spans 327 residues: MPRKTSSQPRPAEPKAVLHPRNRHSGRYDFPKLIAACPELGEYVILNPYGKQSIDFANPDAVRVFNRALLRQFYGIQHWDIPAGYLCPPVPGRADYLHGLADLLAADNAGVIPRGAAVRVLDIGTGANCIYPLIGHREYGWRFTGSDIDATALASARTIVAANRLDKVIELRRQDTSTQLFKGILAADERFELTLCNPPFHASQAEAASGSQRKWRNLGKLDPSRKLPKLNFGGQAAELWCEGGEAAFVARMADESVAYAKQVYRFSTLVSKGGNVAPLMVRLQRLGALQVQALDMAQGQKKSRFVTWTFLDAAEQAAWRTERWPRS.

The interval 1–24 is disordered; that stretch reads MPRKTSSQPRPAEPKAVLHPRNRH.

Belongs to the methyltransferase superfamily. METTL16/RlmF family.

Its subcellular location is the cytoplasm. The enzyme catalyses adenosine(1618) in 23S rRNA + S-adenosyl-L-methionine = N(6)-methyladenosine(1618) in 23S rRNA + S-adenosyl-L-homocysteine + H(+). Its function is as follows. Specifically methylates the adenine in position 1618 of 23S rRNA. The polypeptide is Ribosomal RNA large subunit methyltransferase F (Stutzerimonas stutzeri (strain A1501) (Pseudomonas stutzeri)).